The primary structure comprises 2313 residues: Protein Ycf2 (2313 aa).

1606-1613 (GSMETGRS) contacts ATP.

Belongs to the Ycf2 family.

The protein resides in the plastid. Its subcellular location is the chloroplast stroma. Its function is as follows. Probable ATPase of unknown function. Its presence in a non-photosynthetic plant (Epifagus virginiana) and experiments in tobacco indicate that it has an essential function which is probably not related to photosynthesis. This is Protein Ycf2 from Psilotum nudum (Whisk fern).